Consider the following 101-residue polypeptide: Synaptobrevin-B (101 aa).

The Cytoplasmic portion of the chain corresponds to 1 to 76 (MSNNPNNSGQ…RRQMWCRNMK (76 aa)). The region spanning 13–73 (KTQSILQEVD…VTIRRQMWCR (61 aa)) is the v-SNARE coiled-coil homology domain. Residues 77–97 (LQLIIIAVVILVLAVILIPII) traverse the membrane as a helical; Anchor for type IV membrane protein segment. Topologically, residues 98-101 (MKFV) are vesicular.

The protein belongs to the synaptobrevin family.

It is found in the cytoplasmic vesicle. Its subcellular location is the secretory vesicle membrane. In terms of biological role, involved in the targeting and/or fusion of transport vesicles to their target membrane. This is Synaptobrevin-B (sybB) from Dictyostelium discoideum (Social amoeba).